Reading from the N-terminus, the 480-residue chain is Aspartyl/glutamyl-tRNA(Asn/Gln) amidotransferase subunit B (480 aa).

This sequence belongs to the GatB/GatE family. GatB subfamily. Heterotrimer of A, B and C subunits.

The enzyme catalyses L-glutamyl-tRNA(Gln) + L-glutamine + ATP + H2O = L-glutaminyl-tRNA(Gln) + L-glutamate + ADP + phosphate + H(+). It carries out the reaction L-aspartyl-tRNA(Asn) + L-glutamine + ATP + H2O = L-asparaginyl-tRNA(Asn) + L-glutamate + ADP + phosphate + 2 H(+). Functionally, allows the formation of correctly charged Asn-tRNA(Asn) or Gln-tRNA(Gln) through the transamidation of misacylated Asp-tRNA(Asn) or Glu-tRNA(Gln) in organisms which lack either or both of asparaginyl-tRNA or glutaminyl-tRNA synthetases. The reaction takes place in the presence of glutamine and ATP through an activated phospho-Asp-tRNA(Asn) or phospho-Glu-tRNA(Gln). This Streptococcus agalactiae serotype III (strain NEM316) protein is Aspartyl/glutamyl-tRNA(Asn/Gln) amidotransferase subunit B.